Reading from the N-terminus, the 98-residue chain is Class II hydrophobin 1 (98 aa).

The N-terminal stretch at 1–16 (MQFFTTVVLFAAAAMA) is a signal peptide. Intrachain disulfides connect Cys29–Cys79, Cys39–Cys70, Cys40–Cys52, and Cys80–Cys92.

It belongs to the cerato-ulmin hydrophobin family. Homodimer. Homodimers further self-assemble to form highly ordered films at water-air interfaces through intermolecular interactions. Expressed in mycelium, conidiating mycelium and aerial hyphae.

It localises to the secreted. It is found in the cell wall. Functionally, aerial growth, conidiation, and dispersal of filamentous fungi in the environment rely upon a capability of their secreting small amphipathic proteins called hydrophobins (HPBs) with low sequence identity. Class I can self-assemble into an outermost layer of rodlet bundles on aerial cell surfaces, conferring cellular hydrophobicity that supports fungal growth, development and dispersal; whereas Class II form highly ordered films at water-air interfaces through intermolecular interactions but contribute nothing to the rodlet structure. Hyd1 is a class II hydrophobin that plays probably a role during conidiophore development and in intraspecific signaling or hyphal fusion. Hyd1 and Hyd3 are jointly required for conidial hydrophobicity and dispersal, but seem not to be involved in mycelia hydrophobicity. Inhibits conidial germination in environments not suitable for mycelial growth. Not necessary for root adhesion and colonization. This chain is Class II hydrophobin 1, found in Bionectria ochroleuca (Gliocladium roseum).